A 444-amino-acid chain; its full sequence is ATP-dependent protease ATPase subunit HslU (444 aa).

ATP contacts are provided by residues I18, 60-65 (GVGKTE), D257, E322, and R394.

This sequence belongs to the ClpX chaperone family. HslU subfamily. In terms of assembly, a double ring-shaped homohexamer of HslV is capped on each side by a ring-shaped HslU homohexamer. The assembly of the HslU/HslV complex is dependent on binding of ATP.

It is found in the cytoplasm. ATPase subunit of a proteasome-like degradation complex; this subunit has chaperone activity. The binding of ATP and its subsequent hydrolysis by HslU are essential for unfolding of protein substrates subsequently hydrolyzed by HslV. HslU recognizes the N-terminal part of its protein substrates and unfolds these before they are guided to HslV for hydrolysis. The polypeptide is ATP-dependent protease ATPase subunit HslU (Psychromonas ingrahamii (strain DSM 17664 / CCUG 51855 / 37)).